Here is a 315-residue protein sequence, read N- to C-terminus: tRNA dimethylallyltransferase (315 aa).

Gly13–Thr20 is an ATP binding site. Substrate is bound at residue Thr15–Thr20. Positions Asp38–Gln41 are interaction with substrate tRNA.

Belongs to the IPP transferase family. Monomer. Requires Mg(2+) as cofactor.

It carries out the reaction adenosine(37) in tRNA + dimethylallyl diphosphate = N(6)-dimethylallyladenosine(37) in tRNA + diphosphate. Catalyzes the transfer of a dimethylallyl group onto the adenine at position 37 in tRNAs that read codons beginning with uridine, leading to the formation of N6-(dimethylallyl)adenosine (i(6)A). In Staphylococcus saprophyticus subsp. saprophyticus (strain ATCC 15305 / DSM 20229 / NCIMB 8711 / NCTC 7292 / S-41), this protein is tRNA dimethylallyltransferase.